A 290-amino-acid polypeptide reads, in one-letter code: Ventral anterior homeobox 2 (290 aa).

Residues 1-17 (MGDGGAERDRGPARRAE) show a composition bias toward basic and acidic residues. Residues 1-75 (MGDGGAERDR…GQPGPGEADH (75 aa)) are disordered. The homeobox DNA-binding region spans 102–161 (PKRTRTSFTAEQLYRLEMEFQRCQYVVGRERTELARQLNLSETQVKVWFQNRRTKQKKDQ). The segment at 205–240 (PSLPGLPASHRGTSLGDPRNSSPRLNPLSSASASPP) is disordered. Residues 222-238 (PRNSSPRLNPLSSASAS) are compositionally biased toward low complexity.

This sequence belongs to the EMX homeobox family.

It is found in the nucleus. Its function is as follows. Transcription factor that may function in dorsoventral specification of the forebrain. Regulates the expression of Wnt signaling antagonists including the expression of a truncated TCF7L2 isoform that cannot bind CTNNB1 and acts therefore as a potent dominant-negative Wnt antagonist. Plays a crucial role in eye development and, in particular, in the specification of the ventral optic vesicle. May be a regulator of axial polarization in the retina. The polypeptide is Ventral anterior homeobox 2 (VAX2) (Homo sapiens (Human)).